Reading from the N-terminus, the 448-residue chain is uncharacterized protein (448 aa).

In terms of tissue distribution, component of the acid-insoluble and acid-soluble organic matrix of the aragonitic skeleton (at protein level).

The protein localises to the secreted. This is an uncharacterized protein from Acropora millepora (Staghorn coral).